Reading from the N-terminus, the 852-residue chain is Polyphosphate kinase (852 aa).

Disordered stretches follow at residues Met1–Ile36 and Ser58–Lys82. Residues Val20–Ile36 show a composition bias toward basic and acidic residues. Residues Ser58–Val67 show a composition bias toward polar residues. Residue Asn131 coordinates ATP. Residues Gly251–Pro303 are disordered. Positions Arg258 to Pro303 are insert. Residues Val270–Glu289 are compositionally biased toward polar residues. Arg524 and Arg554 together coordinate Mg(2+). The Phosphohistidine intermediate role is filled by His584. ATP contacts are provided by Tyr617, Arg713, and His741.

Belongs to the polyphosphate kinase 1 (PPK1) family. It depends on Mg(2+) as a cofactor. An intermediate of this reaction is the autophosphorylated ppk in which a phosphate is covalently linked to a histidine residue through a N-P bond.

It carries out the reaction [phosphate](n) + ATP = [phosphate](n+1) + ADP. Functionally, catalyzes the reversible transfer of the terminal phosphate of ATP to form a long-chain polyphosphate (polyP). The sequence is that of Polyphosphate kinase from Rhodopirellula baltica (strain DSM 10527 / NCIMB 13988 / SH1).